The chain runs to 233 residues: Riboflavin kinase (233 aa).

An H-T-H motif-like region spans residues 1–104 (MVRDIKTFKF…YKKIFDDEGT (104 aa)). The interval 105 to 233 (IKIKGEVFSG…GDFVEVEVIL (129 aa)) is riboflavin kinase. Residue 114–119 (GVGEGR) coordinates CDP. 2 residues coordinate Mg(2+): threonine 143 and asparagine 145. Threonine 200 and glutamate 208 together coordinate FMN. 213–216 (VKLR) is a CDP binding site.

Belongs to the archaeal riboflavin kinase family. Requires Mg(2+) as cofactor.

It catalyses the reaction riboflavin + CTP = CDP + FMN + H(+). The protein operates within cofactor biosynthesis; FMN biosynthesis; FMN from riboflavin (CTP route): step 1/1. In terms of biological role, catalyzes the CTP-dependent phosphorylation of riboflavin (vitamin B2) to form flavin mononucleotide (FMN). In Archaeoglobus fulgidus (strain ATCC 49558 / DSM 4304 / JCM 9628 / NBRC 100126 / VC-16), this protein is Riboflavin kinase (ribK).